The chain runs to 789 residues: Probable phosphoketolase (789 aa).

This sequence belongs to the XFP family. Thiamine diphosphate serves as cofactor.

The sequence is that of Probable phosphoketolase from Brucella abortus (strain 2308).